Reading from the N-terminus, the 389-residue chain is Probable protein phosphatase 2C 12 (389 aa).

Residues 42-356 enclose the PPM-type phosphatase domain; the sequence is VASLFSQRGK…DDCSAVCLFL (315 aa). Residues aspartate 77 and glycine 78 each contribute to the Mn(2+) site. Positions 119–145 are disordered; the sequence is AFSDDAAASSSADSSGNSSPQPSASAS. Low complexity predominate over residues 121 to 145; the sequence is SDDAAASSSADSSGNSSPQPSASAS. Residues aspartate 301 and aspartate 347 each coordinate Mn(2+).

It belongs to the PP2C family. Requires Mg(2+) as cofactor. Mn(2+) serves as cofactor.

It carries out the reaction O-phospho-L-seryl-[protein] + H2O = L-seryl-[protein] + phosphate. It catalyses the reaction O-phospho-L-threonyl-[protein] + H2O = L-threonyl-[protein] + phosphate. This Oryza sativa subsp. japonica (Rice) protein is Probable protein phosphatase 2C 12.